A 486-amino-acid polypeptide reads, in one-letter code: Solute carrier family 2, facilitated glucose transporter member 5 (486 aa).

Met-1 carries the N-acetylmethionine modification. The Cytoplasmic portion of the chain corresponds to 1–19; that stretch reads MEQEGQEKKKEGRLTLVLA. A helical membrane pass occupies residues 20 to 40; it reads LRTLIAAFGSSFQYAYNVSVC. A D-fructose-binding site is contributed by Tyr-33. Residues 41–69 are Extracellular-facing; it reads NSPSELMTEFYNDTYYDRTGELIDEFPLT. A glycan (N-linked (GlcNAc...) asparagine) is linked at Asn-52. The chain crosses the membrane as a helical span at residues 70–92; that stretch reads LLWSVTVSMFPSGGFAGSLLVGP. Topologically, residues 93–99 are cytoplasmic; sequence LVNKFGR. A helical transmembrane segment spans residues 100–120; that stretch reads KGALLFNNIFSIVPAILMGCS. At 121–127 the chain is on the extracellular side; sequence KVARSFE. Residues 128-150 form a helical membrane-spanning segment; that stretch reads LIIISRLLVGICAGVSSNVVPMY. Residues 151-162 are Cytoplasmic-facing; it reads LGELAPKNLRGA. Residues 163–183 traverse the membrane as a helical segment; sequence LGVESQLFITLGILVAQIFGL. Gln-168 is a D-fructose binding site. Residues 184-192 are Extracellular-facing; that stretch reads RSIRQQKGW. Residues 193–211 traverse the membrane as a helical segment; the sequence is PILLGLTGGPAAAACPPFF. The Cytoplasmic segment spans residues 212–274; it reads PESPRYLLIG…LCAMRGLAWQ (63 aa). The helical transmembrane segment at 275 to 294 threads the bilayer; the sequence is LISVVPLMWQQLSGVNAIYY. D-fructose is bound by residues Gln-284 and 292-294; that span reads IYY. Residues 295 to 306 lie on the Extracellular side of the membrane; it reads YDQIYLSPLDTD. The helical transmembrane segment at 307–327 threads the bilayer; sequence TQYYTAATGAVNVLMTVCTVF. The Cytoplasmic portion of the chain corresponds to 328 to 334; it reads VVESWAR. Residues 335 to 355 traverse the membrane as a helical segment; that stretch reads LLLLLGFSPLAPTCCVLTAAL. At 356–363 the chain is on the extracellular side; it reads ALQDTVSW. A helical transmembrane segment spans residues 364–385; it reads MPYISIVCIIVYVIGHAIGPAI. Residue His-379 coordinates D-fructose. Topologically, residues 386–402 are cytoplasmic; it reads RSLYTEIFLQSGRPPTW. Residues 403 to 421 traverse the membrane as a helical segment; it reads WGQVHWLSNFTVGLVFPLI. Position 407 to 408 (407 to 408) interacts with D-fructose; it reads HW. Topologically, residues 422 to 426 are extracellular; the sequence is QWAGL. The chain crosses the membrane as a helical span at residues 427 to 447; sequence YSFIIFGVACLSTTVYTFLIV. Over 448–486 the chain is Cytoplasmic; that stretch reads PETKGKSFIEIIRRFIRMNKVEVSPDREELKDFPPDVSE.

This sequence belongs to the major facilitator superfamily. Sugar transporter (TC 2.A.1.1) family. Glucose transporter subfamily. Detected in jejunum. Detected at the intestinal brush-border membrane (at protein level). Detected in duodenum, jejunum and kidney.

Its subcellular location is the apical cell membrane. The protein resides in the cell membrane. It is found in the sarcolemma. It catalyses the reaction D-fructose(out) = D-fructose(in). In terms of biological role, functions as a fructose transporter that has only low activity with other monosaccharides. Can mediate the uptake of deoxyglucose, but with low efficiency. Essential for fructose uptake in the small intestine. Plays a role in the regulation of salt uptake and blood pressure in response to dietary fructose. Required for the development of high blood pressure in response to high dietary fructose intake. The sequence is that of Solute carrier family 2, facilitated glucose transporter member 5 from Oryctolagus cuniculus (Rabbit).